The chain runs to 301 residues: Probable alpha-L-glutamate ligase (301 aa).

Positions 104–287 (TQLLARKGIG…IAGTIYAFLE (184 aa)) constitute an ATP-grasp domain. Residues lysine 141, 178-179 (EY), aspartate 187, and 211-213 (RSN) contribute to the ATP site. Residues aspartate 248, glutamate 260, and asparagine 262 each contribute to the Mg(2+) site. The Mn(2+) site is built by aspartate 248, glutamate 260, and asparagine 262.

Belongs to the RimK family. Mg(2+) serves as cofactor. The cofactor is Mn(2+).

The protein is Probable alpha-L-glutamate ligase of Alkalilimnicola ehrlichii (strain ATCC BAA-1101 / DSM 17681 / MLHE-1).